The following is a 105-amino-acid chain: DNA-directed RNA polymerases I and III subunit RPAC2 (105 aa).

Belongs to the archaeal Rpo11/eukaryotic RPB11/RPC19 RNA polymerase subunit family. As to quaternary structure, component of the RNA polymerase I (Pol I) and RNA polymerase III (Pol III) complexes consisting of at least 13 and 17 subunits, respectively.

It is found in the nucleus. In terms of biological role, DNA-dependent RNA polymerase catalyzes the transcription of DNA into RNA using the four ribonucleoside triphosphates as substrates. Common core component of RNA polymerases I and III which synthesize ribosomal RNA precursors and small RNAs, such as 5S rRNA and tRNAs, respectively. This chain is DNA-directed RNA polymerases I and III subunit RPAC2, found in Drosophila melanogaster (Fruit fly).